Consider the following 222-residue polypeptide: Dense granule protein 3 (222 aa).

The next 2 helical transmembrane spans lie at 22 to 42 (LIPF…GGLA) and 162 to 182 (IPGY…RKVL). The Prevents secretion from ER motif lies at 219-222 (KKQT).

In terms of assembly, homodimer. Interacts (via N-terminus) with human host CAMLG (via N-terminus).

The protein localises to the cytoplasm. It is found in the host endoplasmic reticulum. It localises to the parasitophorous vacuole membrane. Functionally, direct host-parasite interaction occurs at the cytoplasmic faces of the parasitophorous vacuole membrane (PVM) and the host endoplasmic reticulum (ER) membrane via GRA3 and host CAMLG association. Direct insertion of GRA3 ER retrieval motif into the host ER membrane contributes to the host ER recruitment to the PVM. The chain is Dense granule protein 3 from Toxoplasma gondii.